A 157-amino-acid chain; its full sequence is MFCPFCRHPDSRVVDSRTSDDGLSIRRRRQCPECGRRFSTTETASLSVIKRNGVVEPFSREKIVTGVRKACQGRPVTDTDLAVLAQRVEEAIRATGASQIEANDIGLSILPPLRELDEVAYLRFASVYQGFDSLDDFESAIAQLRVAHAATPDADAL.

The segment at 3–34 (CPFCRHPDSRVVDSRTSDDGLSIRRRRQCPEC) is a zinc-finger region. Residues 46 to 136 (LSVIKRNGVV…VYQGFDSLDD (91 aa)) form the ATP-cone domain.

It belongs to the NrdR family. Requires Zn(2+) as cofactor.

Functionally, negatively regulates transcription of bacterial ribonucleotide reductase nrd genes and operons by binding to NrdR-boxes. The sequence is that of Transcriptional repressor NrdR from Clavibacter michiganensis subsp. michiganensis (strain NCPPB 382).